We begin with the raw amino-acid sequence, 312 residues long: Tetraacyldisaccharide 4'-kinase (312 aa).

ATP is bound at residue 60 to 67 (IAGGSGKT).

The protein belongs to the LpxK family.

The enzyme catalyses a lipid A disaccharide + ATP = a lipid IVA + ADP + H(+). Its pathway is glycolipid biosynthesis; lipid IV(A) biosynthesis; lipid IV(A) from (3R)-3-hydroxytetradecanoyl-[acyl-carrier-protein] and UDP-N-acetyl-alpha-D-glucosamine: step 6/6. In terms of biological role, transfers the gamma-phosphate of ATP to the 4'-position of a tetraacyldisaccharide 1-phosphate intermediate (termed DS-1-P) to form tetraacyldisaccharide 1,4'-bis-phosphate (lipid IVA). The protein is Tetraacyldisaccharide 4'-kinase of Helicobacter acinonychis (strain Sheeba).